A 187-amino-acid chain; its full sequence is Benzene 1,2-dioxygenase subunit beta (187 aa).

This sequence belongs to the bacterial ring-hydroxylating dioxygenase beta subunit family. As to quaternary structure, this dioxygenase system consists of four proteins: the two subunits of the hydroxylase component (BnzA and BnzB), a ferredoxin (BnzC) and a ferredoxin reductase (BnzD). [2Fe-2S] cluster serves as cofactor. It depends on Fe cation as a cofactor.

It carries out the reaction benzene + NADH + O2 + H(+) = cis-1,2-dihydrobenzene-1,2-diol + NAD(+). The enzyme catalyses toluene + NADH + O2 + H(+) = (1S,2R)-3-methylcyclohexa-3,5-diene-1,2-diol + NAD(+). It functions in the pathway aromatic compound metabolism; benzene degradation; catechol from benzene: step 1/2. Its pathway is xenobiotic degradation; toluene degradation. The protein operates within xenobiotic degradation; xylene degradation. In terms of biological role, catalyzes both the oxidation of benzene and toluene. The beta subunit may be responsible for the substrate specificity of the enzyme. The protein is Benzene 1,2-dioxygenase subunit beta (bnzB) of Pseudomonas putida (strain ATCC 700007 / DSM 6899 / JCM 31910 / BCRC 17059 / LMG 24140 / F1).